The chain runs to 514 residues: Serine--tRNA ligase, cytoplasmic (514 aa).

Methionine 1 is subject to N-acetylmethionine. The segment at 9-61 (RVDKGGDPALIRETQEKRFKDPGLVDQLVKADSEWRRCRFRADNLNKLKNLCS) is interaction with tRNA. Residue serine 241 is modified to Phosphoserine. L-serine is bound by residues threonine 271 and arginine 302. ATP is bound by residues 302-304 (RQE) and 318-321 (VHQF). Lysine 323 carries the N6-acetyllysine modification. Position 325 (glutamate 325) interacts with L-serine. 391 to 394 (ELVS) contributes to the ATP binding site. Asparagine 427 contacts L-serine. The tract at residues 472–514 (KPAPIDQEPSKKQKKQHEGSKKKAAARDVTLENRLQNMEVTDA) is disordered. The segment covering 479–502 (EPSKKQKKQHEGSKKKAAARDVTL) has biased composition (basic and acidic residues). Residues 482 to 494 (KKQKKQHEGSKKK) carry the Nuclear localization signal motif. The span at 504-514 (NRLQNMEVTDA) shows a compositional bias: polar residues.

This sequence belongs to the class-II aminoacyl-tRNA synthetase family. Type-1 seryl-tRNA synthetase subfamily. In terms of assembly, homodimer. The tRNA molecule may bind across the dimer. Interacts with SIRT2. Interacts with METTL6; interaction is required for the tRNA N(3)-methylcytidine methyltransferase activity of METTL6.

It localises to the cytoplasm. The protein resides in the nucleus. It catalyses the reaction tRNA(Ser) + L-serine + ATP = L-seryl-tRNA(Ser) + AMP + diphosphate + H(+). The enzyme catalyses tRNA(Sec) + L-serine + ATP = L-seryl-tRNA(Sec) + AMP + diphosphate + H(+). The protein operates within aminoacyl-tRNA biosynthesis; selenocysteinyl-tRNA(Sec) biosynthesis; L-seryl-tRNA(Sec) from L-serine and tRNA(Sec): step 1/1. In terms of biological role, catalyzes the attachment of serine to tRNA(Ser) in a two-step reaction: serine is first activated by ATP to form Ser-AMP and then transferred to the acceptor end of tRNA(Ser). Is probably also able to aminoacylate tRNA(Sec) with serine, to form the misacylated tRNA L-seryl-tRNA(Sec), which will be further converted into selenocysteinyl-tRNA(Sec). In the nucleus, binds to the VEGFA core promoter and prevents MYC binding and transcriptional activation by MYC. Recruits SIRT2 to the VEGFA promoter, promoting deacetylation of histone H4 at 'Lys-16' (H4K16). Thereby, inhibits the production of VEGFA and sprouting angiogenesis mediated by VEGFA. The sequence is that of Serine--tRNA ligase, cytoplasmic (SARS1) from Oryctolagus cuniculus (Rabbit).